The following is a 184-amino-acid chain: Shikimate kinase (184 aa).

17 to 22 (GAGKTT) contacts ATP. Threonine 21 is a Mg(2+) binding site. Residues aspartate 39, arginine 63, and glycine 85 each contribute to the substrate site. Arginine 123 is a binding site for ATP. Arginine 142 is a binding site for substrate.

It belongs to the shikimate kinase family. As to quaternary structure, monomer. Requires Mg(2+) as cofactor.

It is found in the cytoplasm. It catalyses the reaction shikimate + ATP = 3-phosphoshikimate + ADP + H(+). Its pathway is metabolic intermediate biosynthesis; chorismate biosynthesis; chorismate from D-erythrose 4-phosphate and phosphoenolpyruvate: step 5/7. Catalyzes the specific phosphorylation of the 3-hydroxyl group of shikimic acid using ATP as a cosubstrate. In Burkholderia lata (strain ATCC 17760 / DSM 23089 / LMG 22485 / NCIMB 9086 / R18194 / 383), this protein is Shikimate kinase.